The sequence spans 526 residues: Serine/threonine-protein kinase ppk22 (526 aa).

Disordered stretches follow at residues 1-24 (MARETEFNDKSPSSTDDGMSQSHF) and 39-106 (AATV…PRPL). Over residues 10–23 (KSPSSTDDGMSQSH) the composition is skewed to polar residues. Low complexity predominate over residues 65–78 (NQLNELDLNDSSDQ). At Ser154 the chain carries Phosphoserine. A Protein kinase domain is found at 155-445 (FEKIRLLGQG…ASDIKQHPFF (291 aa)). ATP-binding positions include 161-169 (LGQGDVGKV) and Lys184. Catalysis depends on Asp280, which acts as the Proton acceptor. Thr339 carries the phosphothreonine modification. At Ser341 the chain carries Phosphoserine. Residue Tyr348 is modified to Phosphotyrosine. One can recognise an AGC-kinase C-terminal domain in the interval 446–526 (RHIQWALLRS…SVTLHHAGDE (81 aa)). The interval 499-526 (MHSSTPVNEQSNPFDSFSSVTLHHAGDE) is disordered. Polar residues predominate over residues 500 to 519 (HSSTPVNEQSNPFDSFSSVT).

This sequence belongs to the protein kinase superfamily. AGC Ser/Thr protein kinase family.

The protein localises to the cytoplasm. The catalysed reaction is L-seryl-[protein] + ATP = O-phospho-L-seryl-[protein] + ADP + H(+). The enzyme catalyses L-threonyl-[protein] + ATP = O-phospho-L-threonyl-[protein] + ADP + H(+). This is Serine/threonine-protein kinase ppk22 (ppk22) from Schizosaccharomyces pombe (strain 972 / ATCC 24843) (Fission yeast).